The chain runs to 478 residues: MMNMITVIGFGSFGRKVVNFIKNKEPITIIDKNIDDADDLVKEGVTVIVGDATQDEVLKKAKIENADIVLILTNEPEVNRRIAERVCELSPNSYKIARAIPRYPELYMGLNIDKIINILESGAKDIAKEVEDAKLKRKLMQLKSVLIEGKKRCMKLEKTEEEKKAPLLILTHINPDPDAIASAMALKTLAERWGVDSDIAYGGNIGYDENKAMINLLGIKLLNVEDIDLDNYCVIAVIDTSTSKQLPIELPNIDIIIDHHNNTDLTAKYMDVRPEVGATASILTQYLMELDIEPSRNLATALFYGIQSDTDYFKRETSKLDFEAAAYLQSYIDASILNMIENPEISTEVMEVLAKAVMNRRVVKGNIALAYVGEISNRDALPKAADFLLKMEGISTTFVFGIVGDEIHISARTKDLRLNLGEILNKAFGGGGHQTAAAAKIPLGIFKAVSDKEALRKLVEEAIRAKILEVIGIKEEEK.

An RCK N-terminal domain is found at 2–120 (MNMITVIGFG…NIDKIINILE (119 aa)).

This is an uncharacterized protein from Methanocaldococcus jannaschii (strain ATCC 43067 / DSM 2661 / JAL-1 / JCM 10045 / NBRC 100440) (Methanococcus jannaschii).